The primary structure comprises 1250 residues: TBC1 domain family member 9B (1250 aa).

GRAM domains follow at residues 142-209 (LKMR…EKNA) and 288-356 (ECYR…EKAD). Thr397 is subject to Phosphothreonine. Residues 397–443 (TPSKQPGSIGSRKASVVDPSTESSPAPQEGSEQPASPASPLSSRQSF) form a disordered region. Phosphoserine is present on residues Ser411, Ser432, Ser435, and Ser463. Positions 414-443 (DPSTESSPAPQEGSEQPASPASPLSSRQSF) are enriched in polar residues. A Rab-GAP TBC domain is found at 508 to 695 (GIPESLRGEL…VIVDCFFYEG (188 aa)). The chain crosses the membrane as a helical span at residues 668 to 688 (LSWFLTLFLSVMPFESAVVIV). The region spanning 879–914 (HTPLLAGRMFRLLDENKDSLINFKEFVTGMSGMYHG) is the EF-hand domain. Disordered stretches follow at residues 974–999 (LPQE…PDYR), 1069–1093 (SART…ELHQ), and 1128–1157 (VEGG…MSSY). A compositionally biased stretch (basic and acidic residues) spans 984–999 (SEERGEEKGTSSPDYR). Phosphoserine is present on Ser1241.

The protein localises to the membrane. May act as a GTPase-activating protein for Rab family protein(s). The sequence is that of TBC1 domain family member 9B (TBC1D9B) from Homo sapiens (Human).